A 161-amino-acid polypeptide reads, in one-letter code: MSGHGAPEIDLTTLNPAETSQLKLAIVAASWHTQIMDGLLDGALRAAKDAGISEPTVLRVPGSFELPVAAARLAKHFDAVVALGVVIRGGTPHFEYVCEAATMGLTDVSVNTGVPVGFGVLTCDTEQQGLDRAGLPGSKEDKGHEAVTAALATAVTLKQYS.

5-amino-6-(D-ribitylamino)uracil contacts are provided by residues Trp-31, 63 to 65 (SFE), and 85 to 87 (VVI). 90-91 (GT) provides a ligand contact to (2S)-2-hydroxy-3-oxobutyl phosphate. The Proton donor role is filled by His-93. Phe-118 is a 5-amino-6-(D-ribitylamino)uracil binding site. Arg-132 contributes to the (2S)-2-hydroxy-3-oxobutyl phosphate binding site.

Belongs to the DMRL synthase family.

The catalysed reaction is (2S)-2-hydroxy-3-oxobutyl phosphate + 5-amino-6-(D-ribitylamino)uracil = 6,7-dimethyl-8-(1-D-ribityl)lumazine + phosphate + 2 H2O + H(+). Its pathway is cofactor biosynthesis; riboflavin biosynthesis; riboflavin from 2-hydroxy-3-oxobutyl phosphate and 5-amino-6-(D-ribitylamino)uracil: step 1/2. Functionally, catalyzes the formation of 6,7-dimethyl-8-ribityllumazine by condensation of 5-amino-6-(D-ribitylamino)uracil with 3,4-dihydroxy-2-butanone 4-phosphate. This is the penultimate step in the biosynthesis of riboflavin. The sequence is that of 6,7-dimethyl-8-ribityllumazine synthase from Arthrobacter sp. (strain FB24).